A 33-amino-acid chain; its full sequence is Brevinin-2Ef (33 aa).

An intrachain disulfide couples cysteine 27 to cysteine 33.

Expressed by the skin glands.

It localises to the secreted. In terms of biological role, shows antibacterial activity against representative Gram-negative and Gram-positive bacterial species, and hemolytic activity. The sequence is that of Brevinin-2Ef from Pelophylax ridibundus (Marsh frog).